The primary structure comprises 360 residues: uncharacterized protein (360 aa).

The region spanning 4-235 (LSLQHIQKIY…PANMFVAGFI (232 aa)) is the ABC transporter domain. 37-44 (GPSGCGKS) lines the ATP pocket.

This sequence belongs to the ABC transporter superfamily.

This is an uncharacterized protein from Escherichia coli O6:H1 (strain CFT073 / ATCC 700928 / UPEC).